The chain runs to 213 residues: Na(+)-translocating NADH-quinone reductase subunit D (213 aa).

A run of 6 helical transmembrane segments spans residues 21-41 (PLIA…VNTA), 42-62 (ITMG…VSLL), 69-86 (SVRM…VIVI), 101-121 (LSVF…AESL), 131-151 (FLDG…VSIV), and 183-203 (FGLM…IWGV).

Belongs to the NqrDE/RnfAE family. As to quaternary structure, composed of six subunits; NqrA, NqrB, NqrC, NqrD, NqrE and NqrF.

It is found in the cell inner membrane. It catalyses the reaction a ubiquinone + n Na(+)(in) + NADH + H(+) = a ubiquinol + n Na(+)(out) + NAD(+). NQR complex catalyzes the reduction of ubiquinone-1 to ubiquinol by two successive reactions, coupled with the transport of Na(+) ions from the cytoplasm to the periplasm. NqrA to NqrE are probably involved in the second step, the conversion of ubisemiquinone to ubiquinol. This is Na(+)-translocating NADH-quinone reductase subunit D from Chlamydia caviae (strain ATCC VR-813 / DSM 19441 / 03DC25 / GPIC) (Chlamydophila caviae).